The following is a 439-amino-acid chain: Ornithine aminotransferase, mitochondrial (439 aa).

A mitochondrion-targeting transit peptide spans 1–25; the sequence is MLSKLARLQTVAGLGLGVHSSVASA. 2 positions are modified to N6-acetyllysine: K49 and K66. K102 is subject to N6-succinyllysine. At K107 the chain carries N6-acetyllysine; alternate. Residue K107 is modified to N6-succinyllysine; alternate. K292 carries the N6-(pyridoxal phosphate)lysine modification. The residue at position 362 (K362) is an N6-acetyllysine; alternate. N6-succinyllysine; alternate is present on K362. N6-acetyllysine is present on residues K386 and K392. The residue at position 405 (K405) is an N6-acetyllysine; alternate. K405 is subject to N6-succinyllysine; alternate. Residue K421 is modified to N6-acetyllysine.

This sequence belongs to the class-III pyridoxal-phosphate-dependent aminotransferase family. Homohexamer. It depends on pyridoxal 5'-phosphate as a cofactor.

The protein resides in the mitochondrion matrix. The enzyme catalyses L-ornithine + 2-oxoglutarate = L-glutamate 5-semialdehyde + L-glutamate. The protein operates within amino-acid biosynthesis; L-proline biosynthesis; L-glutamate 5-semialdehyde from L-ornithine: step 1/1. Catalyzes the reversible interconversion of L-ornithine and 2-oxoglutarate to L-glutamate semialdehyde and L-glutamate. This is Ornithine aminotransferase, mitochondrial (OAT) from Bos taurus (Bovine).